The primary structure comprises 117 residues: Regulator of ribonuclease activity B (117 aa).

Belongs to the RraB family. In terms of assembly, interacts with the C-terminal region of Rne.

It is found in the cytoplasm. In terms of biological role, globally modulates RNA abundance by binding to RNase E (Rne) and regulating its endonucleolytic activity. Can modulate Rne action in a substrate-dependent manner by altering the composition of the degradosome. This chain is Regulator of ribonuclease activity B, found in Pseudoalteromonas atlantica (strain T6c / ATCC BAA-1087).